The following is a 208-amino-acid chain: Small ribosomal subunit protein uS4 (208 aa).

Residues 98–161 (QRLDNVVYRM…KTNPQIVRAI (64 aa)) form the S4 RNA-binding domain.

The protein belongs to the universal ribosomal protein uS4 family. Part of the 30S ribosomal subunit. Contacts protein S5. The interaction surface between S4 and S5 is involved in control of translational fidelity.

One of the primary rRNA binding proteins, it binds directly to 16S rRNA where it nucleates assembly of the body of the 30S subunit. Functionally, with S5 and S12 plays an important role in translational accuracy. The protein is Small ribosomal subunit protein uS4 of Campylobacter fetus subsp. fetus (strain 82-40).